Reading from the N-terminus, the 457-residue chain is tRNA-2-methylthio-N(6)-dimethylallyladenosine synthase (457 aa).

One can recognise an MTTase N-terminal domain in the interval 3–120 (KKVYVKTFGC…LPQMIDARRA (118 aa)). 6 residues coordinate [4Fe-4S] cluster: C12, C49, C83, C157, C161, and C164. Residues 143–377 (RVEGPSAFVS…QATIEENVAR (235 aa)) form the Radical SAM core domain. The TRAM domain occupies 380–447 (QSMVGKVERI…PHSLRGELLL (68 aa)).

Belongs to the methylthiotransferase family. MiaB subfamily. In terms of assembly, monomer. The cofactor is [4Fe-4S] cluster.

It is found in the cytoplasm. It catalyses the reaction N(6)-dimethylallyladenosine(37) in tRNA + (sulfur carrier)-SH + AH2 + 2 S-adenosyl-L-methionine = 2-methylsulfanyl-N(6)-dimethylallyladenosine(37) in tRNA + (sulfur carrier)-H + 5'-deoxyadenosine + L-methionine + A + S-adenosyl-L-homocysteine + 2 H(+). Functionally, catalyzes the methylthiolation of N6-(dimethylallyl)adenosine (i(6)A), leading to the formation of 2-methylthio-N6-(dimethylallyl)adenosine (ms(2)i(6)A) at position 37 in tRNAs that read codons beginning with uridine. This is tRNA-2-methylthio-N(6)-dimethylallyladenosine synthase from Burkholderia vietnamiensis (strain G4 / LMG 22486) (Burkholderia cepacia (strain R1808)).